A 420-amino-acid polypeptide reads, in one-letter code: Senescence-associated protein SPA15, chloroplastic (420 aa).

A chloroplast-targeting transit peptide spans 1 to 68; the sequence is MAKPNGIIYS…YIATRGSSLR (68 aa). The segment at 85–111 is disordered; the sequence is EYRDSSDTSSMQGKDKDPASLGKSGTP.

It belongs to the ATA15/OSA15 family. Expressed in leaves.

It is found in the plastid. The protein localises to the chloroplast. May be involved in the regulation of leaf senescence. The protein is Senescence-associated protein SPA15, chloroplastic of Ipomoea batatas (Sweet potato).